Consider the following 160-residue polypeptide: Transcriptional regulator MraZ (160 aa).

SpoVT-AbrB domains follow at residues 5-50 (KFDT…GDQV) and 93-136 (AVEC…SQAV).

Belongs to the MraZ family. As to quaternary structure, forms oligomers.

It localises to the cytoplasm. Its subcellular location is the nucleoid. The sequence is that of Transcriptional regulator MraZ from Geobacter sp. (strain M21).